The primary structure comprises 396 residues: Elongation factor Tu (396 aa).

The 197-residue stretch at 10-206 (KPHVNIGTIG…AVDEYIPTPQ (197 aa)) folds into the tr-type G domain. The tract at residues 19-26 (GHVDHGKT) is G1. 19-26 (GHVDHGKT) provides a ligand contact to GTP. Thr-26 is a binding site for Mg(2+). The tract at residues 60 to 64 (GITIS) is G2. The segment at 81 to 84 (DCPG) is G3. GTP-binding positions include 81–85 (DCPGH) and 136–139 (NKVD). The segment at 136-139 (NKVD) is G4. Positions 174 to 176 (SAL) are G5.

It belongs to the TRAFAC class translation factor GTPase superfamily. Classic translation factor GTPase family. EF-Tu/EF-1A subfamily. Monomer.

The protein resides in the cytoplasm. The enzyme catalyses GTP + H2O = GDP + phosphate + H(+). Functionally, GTP hydrolase that promotes the GTP-dependent binding of aminoacyl-tRNA to the A-site of ribosomes during protein biosynthesis. This is Elongation factor Tu from Stigmatella aurantiaca.